The following is a 148-amino-acid chain: UPF0756 membrane protein YeaL (148 aa).

A run of 4 helical transmembrane segments spans residues 14–34, 51–71, 86–106, and 121–141; these read ALGF…LIIV, LSIG…SGTL, LVAI…VTLM, and VLGV…AGLV.

Belongs to the UPF0756 family.

It localises to the cell membrane. This is UPF0756 membrane protein YeaL from Escherichia coli O127:H6 (strain E2348/69 / EPEC).